The primary structure comprises 1395 residues: DNA-directed RNA polymerase subunit beta' (1395 aa).

Zn(2+)-binding residues include cysteine 70, cysteine 72, cysteine 85, and cysteine 88. Residues aspartate 461, aspartate 463, and aspartate 465 each coordinate Mg(2+). Zn(2+)-binding residues include cysteine 815, cysteine 889, cysteine 896, and cysteine 899.

The protein belongs to the RNA polymerase beta' chain family. In terms of assembly, the RNAP catalytic core consists of 2 alpha, 1 beta, 1 beta' and 1 omega subunit. When a sigma factor is associated with the core the holoenzyme is formed, which can initiate transcription. Mg(2+) serves as cofactor. Requires Zn(2+) as cofactor.

The enzyme catalyses RNA(n) + a ribonucleoside 5'-triphosphate = RNA(n+1) + diphosphate. DNA-dependent RNA polymerase catalyzes the transcription of DNA into RNA using the four ribonucleoside triphosphates as substrates. In Ruthia magnifica subsp. Calyptogena magnifica, this protein is DNA-directed RNA polymerase subunit beta'.